A 715-amino-acid polypeptide reads, in one-letter code: DNA ligase (715 aa).

NAD(+)-binding positions include 47-51, 96-97, and Glu128; these read DADYD and SL. Lys130 functions as the N6-AMP-lysine intermediate in the catalytic mechanism. NAD(+)-binding residues include Arg151, Glu188, Lys306, and Lys330. Zn(2+) contacts are provided by Cys435, Cys438, Cys453, and Cys459. The 79-residue stretch at 637-715 folds into the BRCT domain; it reads RRDTAVAGKT…EDEWLALIGN (79 aa).

The protein belongs to the NAD-dependent DNA ligase family. LigA subfamily. Mg(2+) is required as a cofactor. Requires Mn(2+) as cofactor.

The catalysed reaction is NAD(+) + (deoxyribonucleotide)n-3'-hydroxyl + 5'-phospho-(deoxyribonucleotide)m = (deoxyribonucleotide)n+m + AMP + beta-nicotinamide D-nucleotide.. Its function is as follows. DNA ligase that catalyzes the formation of phosphodiester linkages between 5'-phosphoryl and 3'-hydroxyl groups in double-stranded DNA using NAD as a coenzyme and as the energy source for the reaction. It is essential for DNA replication and repair of damaged DNA. In Rhodopseudomonas palustris (strain ATCC BAA-98 / CGA009), this protein is DNA ligase.